The chain runs to 101 residues: Small ribosomal subunit protein uS14 (101 aa).

The tract at residues 51–70 (LPRDSSPSRQRNRCSQTGRP) is disordered. A compositionally biased stretch (polar residues) spans 52–68 (PRDSSPSRQRNRCSQTG).

It belongs to the universal ribosomal protein uS14 family. In terms of assembly, part of the 30S ribosomal subunit. Contacts proteins S3 and S10.

In terms of biological role, binds 16S rRNA, required for the assembly of 30S particles and may also be responsible for determining the conformation of the 16S rRNA at the A site. The chain is Small ribosomal subunit protein uS14 from Mannheimia succiniciproducens (strain KCTC 0769BP / MBEL55E).